The following is a 167-amino-acid chain: Phosphopantetheine adenylyltransferase (167 aa).

Residue serine 9 coordinates substrate. ATP contacts are provided by residues 9–10 (SF) and histidine 17. Substrate-binding residues include lysine 41, valine 78, and arginine 92. ATP contacts are provided by residues 93–95 (GLR), glutamate 103, and 128–134 (SRPITAT).

Belongs to the bacterial CoaD family. Homohexamer. The cofactor is Mg(2+).

It is found in the cytoplasm. The catalysed reaction is (R)-4'-phosphopantetheine + ATP + H(+) = 3'-dephospho-CoA + diphosphate. It functions in the pathway cofactor biosynthesis; coenzyme A biosynthesis; CoA from (R)-pantothenate: step 4/5. Reversibly transfers an adenylyl group from ATP to 4'-phosphopantetheine, yielding dephospho-CoA (dPCoA) and pyrophosphate. This chain is Phosphopantetheine adenylyltransferase, found in Rhizobium rhizogenes (strain K84 / ATCC BAA-868) (Agrobacterium radiobacter).